The sequence spans 533 residues: Metal transporter nramp1 homolog (533 aa).

The tract at residues 1–33 (MTPRIESEESAPLVNKNNNNNNDNNNNNNVDEE) is disordered. Topologically, residues 1–68 (MTPRIESEES…PNIDKPDSKW (68 aa)) are cytoplasmic. A compositionally biased stretch (low complexity) spans 14-29 (VNKNNNNNNDNNNNNN). A helical transmembrane segment spans residues 69 to 89 (INFKTLWAFTGPGFLMSIAYL). The Extracellular portion of the chain corresponds to 90-101 (DPGNLESDIQAG). A helical transmembrane segment spans residues 102–122 (AMAGYQLLWVLFWSTVIGFWL). At 123–158 (QMLASRLGVVTGKHLAEHCREQYPKTPRLLLWLMTE) the chain is on the cytoplasmic side. The chain crosses the membrane as a helical span at residues 159 to 179 (LAIIGSDIQEVIGTAIALQIL). The Extracellular segment spans residues 180 to 182 (SNG). A helical membrane pass occupies residues 183 to 203 (HIPLWAGVLFTAADTFTFLFL). Over 204–212 (EKYGIRKLE) the chain is Cytoplasmic. A helical transmembrane segment spans residues 213–233 (AFFCSLIAIMAISFGVEYIIS). Topologically, residues 234–256 (KPDQIEVVKGVFIPLCSQNNISQ) are extracellular. N253 carries N-linked (GlcNAc...) asparagine glycosylation. Residues 257–277 (AVGILGAVVMPHNIYLHSALV) form a helical membrane-spanning segment. Over 278–302 (QSREIDRKSETQVKIANKYNRLESA) the chain is Cytoplasmic. A helical membrane pass occupies residues 303-323 (FALIISFIINLLLVSVFAKGF). At 324-348 (YGETTEIGLSSAADFLMDKYGKVAK) the chain is on the extracellular side. A helical transmembrane segment spans residues 349–368 (YIWAIGLFSAGQCSTMTGTY). At 369-387 (SGQFVMEGFLKLKIAPWKR) the chain is on the cytoplasmic side. A helical membrane pass occupies residues 388-408 (LLITRCTAIVPAMVVAILSTS). Topologically, residues 409 to 415 (HLDSLDQ) are extracellular. The chain crosses the membrane as a helical span at residues 416–436 (WLNILQSIQLPFAVVPVLLFT). At 437 to 457 (SSEKIMGSKFKNHWLNNQFVR) the chain is on the cytoplasmic side. The helical transmembrane segment at 458–478 (FLSLLIIAINIYLIITFSMQI) threads the bilayer. Topologically, residues 479-481 (SES) are extracellular. A helical membrane pass occupies residues 482–502 (AWMISIVSISFFFYFIFIVYL). Residues 503 to 533 (SMGQENFNSMTKKIKNLFNNNSNQTYNNINY) lie on the Cytoplasmic side of the membrane.

This sequence belongs to the NRAMP family.

Its subcellular location is the membrane. Depletes iron from the phagolysosome in an ATP-dependent process. May rather act as a symporter of protons and metal cations in an ATP-dependent process. Nramp1 overexpression protected cells from L.pneumophila infection. This chain is Metal transporter nramp1 homolog (nramp1), found in Dictyostelium discoideum (Social amoeba).